Consider the following 499-residue polypeptide: Xylulose kinase (499 aa).

81–82 (MH) contacts substrate. Asp239 acts as the Proton acceptor in catalysis.

The protein belongs to the FGGY kinase family.

The enzyme catalyses D-xylulose + ATP = D-xylulose 5-phosphate + ADP + H(+). In terms of biological role, catalyzes the phosphorylation of D-xylulose to D-xylulose 5-phosphate. The polypeptide is Xylulose kinase (Bacillus subtilis (strain 168)).